The primary structure comprises 224 residues: Acyl-protein thioesterase 1 (224 aa).

Active-site charge relay system residues include Ser116, Asp170, and His203.

It belongs to the AB hydrolase superfamily. AB hydrolase 2 family.

It localises to the cytoplasm. It is found in the nucleus. The enzyme catalyses S-hexadecanoyl-L-cysteinyl-[protein] + H2O = L-cysteinyl-[protein] + hexadecanoate + H(+). Functionally, hydrolyzes fatty acids from S-acylated cysteine residues in proteins with a strong preference for palmitoylated G-alpha proteins over other acyl substrates. Mediates the deacylation of G-alpha proteins such as GPA1 in vivo, but has weak or no activity toward palmitoylated Ras proteins. Has weak lysophospholipase activity in vitro; however such activity may not exist in vivo. This chain is Acyl-protein thioesterase 1, found in Schizosaccharomyces pombe (strain 972 / ATCC 24843) (Fission yeast).